Consider the following 429-residue polypeptide: Malate dehydrogenase [NADP] 1, chloroplastic (429 aa).

The transit peptide at 1–40 (MGLSTAYSPVGSHLAPAPLGHRRSAQLHRPRRALLATVRC) directs the protein to the chloroplast. Cys64 and Cys69 are disulfide-bonded. 93–99 (GAAGMIS) contributes to the NADP(+) binding site. Arg174 and Arg180 together coordinate substrate. NADP(+)-binding positions include Asn187, Gln194, and 211–213 (VGN). Substrate contacts are provided by Asn213 and Arg244. Residue His269 is the Proton acceptor of the active site. Cys405 and Cys417 form a disulfide bridge.

Belongs to the LDH/MDH superfamily. MDH type 2 family. Homodimer.

It localises to the plastid. The protein localises to the chloroplast. The enzyme catalyses (S)-malate + NADP(+) = oxaloacetate + NADPH + H(+). With respect to regulation, chloroplast NADP-MDH is activated upon illumination. In order to be enzymatically active, disulfide bridges on the protein must be reduced by thioredoxin which receives electrons from ferredoxin and the electron transport system of photosynthesis. Functionally, the chloroplastic, NADP-dependent form is essential for the photosynthesis C4 cycle, which allows plants to circumvent the problem of photorespiration. In C4 plants, NADP-MDH activity acts to convert oxaloacetate to malate in chloroplasts of mesophyll cells for transport to the bundle sheath cells. This chain is Malate dehydrogenase [NADP] 1, chloroplastic, found in Sorghum bicolor (Sorghum).